Here is a 459-residue protein sequence, read N- to C-terminus: UDP-N-acetylmuramate--L-alanine ligase (459 aa).

Residue 118–124 (GTHGKTT) participates in ATP binding.

It belongs to the MurCDEF family.

The protein localises to the cytoplasm. The catalysed reaction is UDP-N-acetyl-alpha-D-muramate + L-alanine + ATP = UDP-N-acetyl-alpha-D-muramoyl-L-alanine + ADP + phosphate + H(+). Its pathway is cell wall biogenesis; peptidoglycan biosynthesis. Cell wall formation. The polypeptide is UDP-N-acetylmuramate--L-alanine ligase (Agathobacter rectalis (strain ATCC 33656 / DSM 3377 / JCM 17463 / KCTC 5835 / VPI 0990) (Eubacterium rectale)).